Consider the following 425-residue polypeptide: Serine--tRNA ligase (425 aa).

Position 233-235 (233-235) interacts with L-serine; it reads TAE. 264-266 is an ATP binding site; the sequence is RAE. L-serine is bound at residue E287. 351–354 is an ATP binding site; that stretch reads EISS. S387 is an L-serine binding site.

The protein belongs to the class-II aminoacyl-tRNA synthetase family. Type-1 seryl-tRNA synthetase subfamily. As to quaternary structure, homodimer. The tRNA molecule binds across the dimer.

It is found in the cytoplasm. The enzyme catalyses tRNA(Ser) + L-serine + ATP = L-seryl-tRNA(Ser) + AMP + diphosphate + H(+). It catalyses the reaction tRNA(Sec) + L-serine + ATP = L-seryl-tRNA(Sec) + AMP + diphosphate + H(+). Its pathway is aminoacyl-tRNA biosynthesis; selenocysteinyl-tRNA(Sec) biosynthesis; L-seryl-tRNA(Sec) from L-serine and tRNA(Sec): step 1/1. In terms of biological role, catalyzes the attachment of serine to tRNA(Ser). Is also able to aminoacylate tRNA(Sec) with serine, to form the misacylated tRNA L-seryl-tRNA(Sec), which will be further converted into selenocysteinyl-tRNA(Sec). The polypeptide is Serine--tRNA ligase (Clostridium botulinum (strain Eklund 17B / Type B)).